Here is a 426-residue protein sequence, read N- to C-terminus: MLLSKYFLPVLKEEPSEAQVTSHKLMLRSGMIRQQAAGIYTWLPLGLKVLKNIENIVRLNMNKAGALEVLMPCIQPAHLWMESGRFDNYGKEMLKFQDRHDNTLLFGPTNEDMITDIFRHNIKSYKDLPKNLYHIQWKFRDEIRPRFGVMRGREFLMKDAYSFDINEENAVKTYNQMYKAYINAFRDLGVFVIPVIADNGPIGGNLSHEFHIIAETGESTIYYDKKFKTLKDNPDIDVEEIKSWYAAAEEKYEVNKLPISEQEITSSKGIEVGHIFYIGSKYSVNMNALINDEYGKLTPIEMSSYGIGISRLVAAIIEANCDEKGIIWPSSVAPFKVSLINLNIHDSKCVELAEMAYKELSDKNIEVLYDDTEARPGSKFATHDLIGSPHQIIIGPKKAANNIVELKDRKSGVIEDIEVGSLMSVL.

It belongs to the class-II aminoacyl-tRNA synthetase family. ProS type 2 subfamily. As to quaternary structure, homodimer.

Its subcellular location is the cytoplasm. The catalysed reaction is tRNA(Pro) + L-proline + ATP = L-prolyl-tRNA(Pro) + AMP + diphosphate. In terms of biological role, catalyzes the attachment of proline to tRNA(Pro) in a two-step reaction: proline is first activated by ATP to form Pro-AMP and then transferred to the acceptor end of tRNA(Pro). The polypeptide is Proline--tRNA ligase (Rickettsia africae (strain ESF-5)).